A 558-amino-acid chain; its full sequence is Dimethylaniline monooxygenase [N-oxide-forming] 4 (558 aa).

Residues 9–13 (GAGVS), Glu-32, and 40–41 (LW) contribute to the FAD site. NADP(+)-binding positions include 60 to 61 (TN) and 195 to 198 (TGGD). The helical transmembrane segment at 517-537 (AWGAPVLLASLLLICKSSLFL) threads the bilayer.

It belongs to the FMO family. FAD is required as a cofactor. In terms of tissue distribution, liver.

The protein localises to the microsome membrane. It localises to the endoplasmic reticulum membrane. It catalyses the reaction N,N-dimethylaniline + NADPH + O2 + H(+) = N,N-dimethylaniline N-oxide + NADP(+) + H2O. This protein is involved in the oxidative metabolism of a variety of xenobiotics such as drugs and pesticides. This is Dimethylaniline monooxygenase [N-oxide-forming] 4 (FMO4) from Homo sapiens (Human).